The primary structure comprises 72 residues: Translation initiation factor IF-1 (72 aa).

An S1-like domain is found at methionine 1 to lysine 72.

It belongs to the IF-1 family. Component of the 30S ribosomal translation pre-initiation complex which assembles on the 30S ribosome in the order IF-2 and IF-3, IF-1 and N-formylmethionyl-tRNA(fMet); mRNA recruitment can occur at any time during PIC assembly.

The protein localises to the cytoplasm. In terms of biological role, one of the essential components for the initiation of protein synthesis. Stabilizes the binding of IF-2 and IF-3 on the 30S subunit to which N-formylmethionyl-tRNA(fMet) subsequently binds. Helps modulate mRNA selection, yielding the 30S pre-initiation complex (PIC). Upon addition of the 50S ribosomal subunit IF-1, IF-2 and IF-3 are released leaving the mature 70S translation initiation complex. In Nitrosomonas eutropha (strain DSM 101675 / C91 / Nm57), this protein is Translation initiation factor IF-1.